The sequence spans 253 residues: Ubiquinone/menaquinone biosynthesis C-methyltransferase UbiE (253 aa).

S-adenosyl-L-methionine-binding positions include threonine 76, aspartate 97, 125–126 (NA), and serine 142.

It belongs to the class I-like SAM-binding methyltransferase superfamily. MenG/UbiE family.

It catalyses the reaction a 2-demethylmenaquinol + S-adenosyl-L-methionine = a menaquinol + S-adenosyl-L-homocysteine + H(+). The catalysed reaction is a 2-methoxy-6-(all-trans-polyprenyl)benzene-1,4-diol + S-adenosyl-L-methionine = a 5-methoxy-2-methyl-3-(all-trans-polyprenyl)benzene-1,4-diol + S-adenosyl-L-homocysteine + H(+). The protein operates within quinol/quinone metabolism; menaquinone biosynthesis; menaquinol from 1,4-dihydroxy-2-naphthoate: step 2/2. It functions in the pathway cofactor biosynthesis; ubiquinone biosynthesis. Functionally, methyltransferase required for the conversion of demethylmenaquinol (DMKH2) to menaquinol (MKH2) and the conversion of 2-polyprenyl-6-methoxy-1,4-benzoquinol (DDMQH2) to 2-polyprenyl-3-methyl-6-methoxy-1,4-benzoquinol (DMQH2). The chain is Ubiquinone/menaquinone biosynthesis C-methyltransferase UbiE from Xylella fastidiosa (strain 9a5c).